The chain runs to 322 residues: uncharacterized protein (322 aa).

4 helical membrane-spanning segments follow: residues 24–44 (LLHLQNFASAGIITILCIQIT), 68–88 (LFFELIGYHPFVIGALLLIFI), 100–120 (IVTSSVIILHLYMSGGITPTF), and 125–145 (VQLITVGIGVALLMNLYMPSL).

It is found in the cell membrane. This is an uncharacterized protein from Bacillus subtilis (strain 168).